A 283-amino-acid chain; its full sequence is Agmatinase (283 aa).

Residues H112, D131, H133, D135, D211, and D213 each coordinate a divalent metal cation.

Belongs to the arginase family. Agmatinase subfamily. As to quaternary structure, homotetramer. It depends on a divalent metal cation as a cofactor.

The enzyme catalyses agmatine + H2O = urea + putrescine. It participates in amine and polyamine biosynthesis; putrescine biosynthesis via agmatine pathway; putrescine from agmatine: step 1/1. Its activity is regulated as follows. Inhibited by putrescine. Activity is not affected by arginine and ornithine. Its function is as follows. Catalyzes the formation of putrescine from agmatine. Cannot use arginine. This Pyrococcus horikoshii (strain ATCC 700860 / DSM 12428 / JCM 9974 / NBRC 100139 / OT-3) protein is Agmatinase.